The primary structure comprises 144 residues: Large ribosomal subunit protein uL16 (144 aa).

Residues M1–R16 are compositionally biased toward basic residues. Residues M1 to G25 form a disordered region.

It belongs to the universal ribosomal protein uL16 family. Part of the 50S ribosomal subunit.

Functionally, binds 23S rRNA and is also seen to make contacts with the A and possibly P site tRNAs. This chain is Large ribosomal subunit protein uL16, found in Desulforamulus reducens (strain ATCC BAA-1160 / DSM 100696 / MI-1) (Desulfotomaculum reducens).